Reading from the N-terminus, the 202-residue chain is MISRLRGTVLEKDLEDATIDVGGVGYRVNFSSLALGKLPAEGQPVDVRVRTVVREDAFDLFGFLTKGEEEVFLLLNSVSRVGPRLSLMVLSGMEVPELVAALSRGEVARLAKIHGVGKKTAERLVLELKDKVKTIHLEAVSRGTAPAAVSGAHADLVSALLNLGYKQPQAEKAADLASERLGAEATFQALFREALKALRSGG.

The domain I stretch occupies residues 1–64 (MISRLRGTVL…EDAFDLFGFL (64 aa)). The domain II stretch occupies residues 65-143 (TKGEEEVFLL…TIHLEAVSRG (79 aa)). A flexible linker region spans residues 143–147 (GTAPA). A domain III region spans residues 148-202 (AVSGAHADLVSALLNLGYKQPQAEKAADLASERLGAEATFQALFREALKALRSGG).

This sequence belongs to the RuvA family. Homotetramer. Forms an RuvA(8)-RuvB(12)-Holliday junction (HJ) complex. HJ DNA is sandwiched between 2 RuvA tetramers; dsDNA enters through RuvA and exits via RuvB. An RuvB hexamer assembles on each DNA strand where it exits the tetramer. Each RuvB hexamer is contacted by two RuvA subunits (via domain III) on 2 adjacent RuvB subunits; this complex drives branch migration. In the full resolvosome a probable DNA-RuvA(4)-RuvB(12)-RuvC(2) complex forms which resolves the HJ.

It localises to the cytoplasm. In terms of biological role, the RuvA-RuvB-RuvC complex processes Holliday junction (HJ) DNA during genetic recombination and DNA repair, while the RuvA-RuvB complex plays an important role in the rescue of blocked DNA replication forks via replication fork reversal (RFR). RuvA specifically binds to HJ cruciform DNA, conferring on it an open structure. The RuvB hexamer acts as an ATP-dependent pump, pulling dsDNA into and through the RuvAB complex. HJ branch migration allows RuvC to scan DNA until it finds its consensus sequence, where it cleaves and resolves the cruciform DNA. This is Holliday junction branch migration complex subunit RuvA from Myxococcus xanthus (strain DK1622).